We begin with the raw amino-acid sequence, 255 residues long: 4-hydroxy-tetrahydrodipicolinate reductase (255 aa).

NAD(+)-binding positions include 8–13 (GSTGRM), 88–90 (ATT), and 112–115 (SSNM). His-144 functions as the Proton donor/acceptor in the catalytic mechanism. Residue His-145 coordinates (S)-2,3,4,5-tetrahydrodipicolinate. The active-site Proton donor is the Lys-148. Residue 154–155 (GT) coordinates (S)-2,3,4,5-tetrahydrodipicolinate.

The protein belongs to the DapB family.

The protein localises to the cytoplasm. The enzyme catalyses (S)-2,3,4,5-tetrahydrodipicolinate + NAD(+) + H2O = (2S,4S)-4-hydroxy-2,3,4,5-tetrahydrodipicolinate + NADH + H(+). It catalyses the reaction (S)-2,3,4,5-tetrahydrodipicolinate + NADP(+) + H2O = (2S,4S)-4-hydroxy-2,3,4,5-tetrahydrodipicolinate + NADPH + H(+). It participates in amino-acid biosynthesis; L-lysine biosynthesis via DAP pathway; (S)-tetrahydrodipicolinate from L-aspartate: step 4/4. Functionally, catalyzes the conversion of 4-hydroxy-tetrahydrodipicolinate (HTPA) to tetrahydrodipicolinate. The polypeptide is 4-hydroxy-tetrahydrodipicolinate reductase (Sulfurovum sp. (strain NBC37-1)).